The following is a 129-amino-acid chain: Cytochrome c oxidase subunit 5B, mitochondrial (129 aa).

A mitochondrion-targeting transit peptide spans 1 to 31 (MASRLLRGAGALAAQALRARGPSGAAAVRSM). Residues Lys68 and Lys86 each carry the N6-acetyllysine modification. Residues Cys91, Cys93, Cys113, and Cys116 each contribute to the Zn(2+) site. Lys121 bears the N6-acetyllysine mark.

It belongs to the cytochrome c oxidase subunit 5B family. In terms of assembly, component of the cytochrome c oxidase (complex IV, CIV), a multisubunit enzyme composed of 14 subunits. The complex is composed of a catalytic core of 3 subunits MT-CO1, MT-CO2 and MT-CO3, encoded in the mitochondrial DNA, and 11 supernumerary subunits COX4I, COX5A, COX5B, COX6A, COX6B, COX6C, COX7A, COX7B, COX7C, COX8 and NDUFA4, which are encoded in the nuclear genome. The complex exists as a monomer or a dimer and forms supercomplexes (SCs) in the inner mitochondrial membrane with NADH-ubiquinone oxidoreductase (complex I, CI) and ubiquinol-cytochrome c oxidoreductase (cytochrome b-c1 complex, complex III, CIII), resulting in different assemblies (supercomplex SCI(1)III(2)IV(1) and megacomplex MCI(2)III(2)IV(2)).

The protein resides in the mitochondrion inner membrane. It participates in energy metabolism; oxidative phosphorylation. Functionally, component of the cytochrome c oxidase, the last enzyme in the mitochondrial electron transport chain which drives oxidative phosphorylation. The respiratory chain contains 3 multisubunit complexes succinate dehydrogenase (complex II, CII), ubiquinol-cytochrome c oxidoreductase (cytochrome b-c1 complex, complex III, CIII) and cytochrome c oxidase (complex IV, CIV), that cooperate to transfer electrons derived from NADH and succinate to molecular oxygen, creating an electrochemical gradient over the inner membrane that drives transmembrane transport and the ATP synthase. Cytochrome c oxidase is the component of the respiratory chain that catalyzes the reduction of oxygen to water. Electrons originating from reduced cytochrome c in the intermembrane space (IMS) are transferred via the dinuclear copper A center (CU(A)) of subunit 2 and heme A of subunit 1 to the active site in subunit 1, a binuclear center (BNC) formed by heme A3 and copper B (CU(B)). The BNC reduces molecular oxygen to 2 water molecules using 4 electrons from cytochrome c in the IMS and 4 protons from the mitochondrial matrix. The sequence is that of Cytochrome c oxidase subunit 5B, mitochondrial (COX5B) from Pongo abelii (Sumatran orangutan).